A 199-amino-acid polypeptide reads, in one-letter code: UPF0301 protein Vapar_4617 (199 aa).

Belongs to the UPF0301 (AlgH) family.

The sequence is that of UPF0301 protein Vapar_4617 from Variovorax paradoxus (strain S110).